The chain runs to 424 residues: UDP-N-acetylglucosamine 1-carboxyvinyltransferase (424 aa).

Residue 22 to 23 participates in phosphoenolpyruvate binding; that stretch reads KN. Arginine 93 is a UDP-N-acetyl-alpha-D-glucosamine binding site. The active-site Proton donor is cysteine 117. Cysteine 117 is subject to 2-(S-cysteinyl)pyruvic acid O-phosphothioketal. Residues 122–126, 164–166, aspartate 307, and isoleucine 329 contribute to the UDP-N-acetyl-alpha-D-glucosamine site; these read RPVDL and SVG.

This sequence belongs to the EPSP synthase family. MurA subfamily.

The protein localises to the cytoplasm. It catalyses the reaction phosphoenolpyruvate + UDP-N-acetyl-alpha-D-glucosamine = UDP-N-acetyl-3-O-(1-carboxyvinyl)-alpha-D-glucosamine + phosphate. Its pathway is cell wall biogenesis; peptidoglycan biosynthesis. Cell wall formation. Adds enolpyruvyl to UDP-N-acetylglucosamine. In Haemophilus influenzae (strain ATCC 51907 / DSM 11121 / KW20 / Rd), this protein is UDP-N-acetylglucosamine 1-carboxyvinyltransferase.